We begin with the raw amino-acid sequence, 1427 residues long: DNA-directed RNA polymerase subunit beta' (1427 aa).

Positions 70, 72, 85, and 88 each coordinate Zn(2+). Residues Asp-461, Asp-463, and Asp-465 each contribute to the Mg(2+) site. Residues Cys-809, Cys-882, Cys-889, and Cys-892 each contribute to the Zn(2+) site. Positions 1394–1427 (EAAIGDDPLGKVQGEDFTTDDVMVEERPEGASEE) are disordered. Over residues 1417–1427 (VEERPEGASEE) the composition is skewed to basic and acidic residues.

This sequence belongs to the RNA polymerase beta' chain family. The RNAP catalytic core consists of 2 alpha, 1 beta, 1 beta' and 1 omega subunit. When a sigma factor is associated with the core the holoenzyme is formed, which can initiate transcription. The cofactor is Mg(2+). Zn(2+) is required as a cofactor.

It carries out the reaction RNA(n) + a ribonucleoside 5'-triphosphate = RNA(n+1) + diphosphate. In terms of biological role, DNA-dependent RNA polymerase catalyzes the transcription of DNA into RNA using the four ribonucleoside triphosphates as substrates. The sequence is that of DNA-directed RNA polymerase subunit beta' from Sphingopyxis alaskensis (strain DSM 13593 / LMG 18877 / RB2256) (Sphingomonas alaskensis).